Reading from the N-terminus, the 160-residue chain is Putative UPF0479 protein YLR466C-A (160 aa).

Helical transmembrane passes span 39–59 and 136–156; these read IVFC…KVLQ and VPMI…ISQH.

It belongs to the UPF0479 family.

Its subcellular location is the membrane. This Saccharomyces cerevisiae (strain ATCC 204508 / S288c) (Baker's yeast) protein is Putative UPF0479 protein YLR466C-A.